The chain runs to 92 residues: Dolichol-phosphate mannosyltransferase subunit 3 (92 aa).

The next 2 helical transmembrane spans lie at 8–28 (LWGL…ALGL) and 37–57 (VLWP…LGTV).

The protein belongs to the DPM3 family. Component of the dolichol-phosphate mannose (DPM) synthase complex composed of DPM1, DPM2 and DPM3; within the complex, associates with DPM1 via its C-terminal domain and with DPM2 via its N-terminal portion. This interaction stabilizes DPM1 protein.

It is found in the endoplasmic reticulum membrane. The protein operates within protein modification; protein glycosylation. Functionally, stabilizer subunit of the dolichol-phosphate mannose (DPM) synthase complex; tethers catalytic subunit DPM1 to the endoplasmic reticulum. This is Dolichol-phosphate mannosyltransferase subunit 3 (DPM3) from Homo sapiens (Human).